Here is a 680-residue protein sequence, read N- to C-terminus: DNA-directed RNA polymerase subunit beta' (680 aa).

Cys69, Cys71, Cys87, and Cys90 together coordinate Zn(2+). 3 residues coordinate Mg(2+): Asp489, Asp491, and Asp493.

This sequence belongs to the RNA polymerase beta' chain family. RpoC1 subfamily. As to quaternary structure, in plastids the minimal PEP RNA polymerase catalytic core is composed of four subunits: alpha, beta, beta', and beta''. When a (nuclear-encoded) sigma factor is associated with the core the holoenzyme is formed, which can initiate transcription. Mg(2+) serves as cofactor. Zn(2+) is required as a cofactor.

The protein localises to the plastid. The protein resides in the chloroplast. It catalyses the reaction RNA(n) + a ribonucleoside 5'-triphosphate = RNA(n+1) + diphosphate. DNA-dependent RNA polymerase catalyzes the transcription of DNA into RNA using the four ribonucleoside triphosphates as substrates. The chain is DNA-directed RNA polymerase subunit beta' from Aethionema grandiflorum (Persian stone-cress).